The chain runs to 373 residues: tRNA-specific 2-thiouridylase MnmA (373 aa).

ATP contacts are provided by residues 12–19 and Met38; that span reads GMSGGVDS. The interval 98-100 is interaction with target base in tRNA; that stretch reads NPD. Cys103 (nucleophile) is an active-site residue. Cysteines 103 and 200 form a disulfide. ATP is bound at residue Gly127. The tract at residues 150-152 is interaction with tRNA; sequence KDQ. The active-site Cysteine persulfide intermediate is Cys200. Residues 312–313 form an interaction with tRNA region; the sequence is RY.

The protein belongs to the MnmA/TRMU family.

The protein resides in the cytoplasm. It catalyses the reaction S-sulfanyl-L-cysteinyl-[protein] + uridine(34) in tRNA + AH2 + ATP = 2-thiouridine(34) in tRNA + L-cysteinyl-[protein] + A + AMP + diphosphate + H(+). Functionally, catalyzes the 2-thiolation of uridine at the wobble position (U34) of tRNA, leading to the formation of s(2)U34. The sequence is that of tRNA-specific 2-thiouridylase MnmA from Streptococcus pyogenes serotype M49 (strain NZ131).